We begin with the raw amino-acid sequence, 430 residues long: Glutamate-1-semialdehyde 2,1-aminomutase (430 aa).

Lysine 265 is subject to N6-(pyridoxal phosphate)lysine.

Belongs to the class-III pyridoxal-phosphate-dependent aminotransferase family. HemL subfamily. Homodimer. It depends on pyridoxal 5'-phosphate as a cofactor.

It is found in the cytoplasm. It catalyses the reaction (S)-4-amino-5-oxopentanoate = 5-aminolevulinate. The protein operates within porphyrin-containing compound metabolism; protoporphyrin-IX biosynthesis; 5-aminolevulinate from L-glutamyl-tRNA(Glu): step 2/2. This is Glutamate-1-semialdehyde 2,1-aminomutase from Helicobacter pylori (strain HPAG1).